The sequence spans 224 residues: UPF0758 protein ABO_0214 (224 aa).

The region spanning 102–224 is the MPN domain; that stretch reads PLDNPDKAGQ…WVSLASRGAV (123 aa). Zn(2+) is bound by residues H173, H175, and D186. Residues 173 to 186 carry the JAMM motif motif; the sequence is HNHPSGVAEPSQSD.

The protein belongs to the UPF0758 family.

The chain is UPF0758 protein ABO_0214 from Alcanivorax borkumensis (strain ATCC 700651 / DSM 11573 / NCIMB 13689 / SK2).